Reading from the N-terminus, the 118-residue chain is Large ribosomal subunit protein uL22c (118 aa).

It belongs to the universal ribosomal protein uL22 family. In terms of assembly, part of the 50S ribosomal subunit.

The protein localises to the plastid. It localises to the chloroplast. This protein binds specifically to 23S rRNA. Functionally, the globular domain of the protein is located near the polypeptide exit tunnel on the outside of the subunit, while an extended beta-hairpin is found that lines the wall of the exit tunnel in the center of the 70S ribosome. This chain is Large ribosomal subunit protein uL22c (rpl22), found in Physcomitrium patens (Spreading-leaved earth moss).